Reading from the N-terminus, the 361-residue chain is MIRARQSVQEIKEYVAGKNVEEVAASYGIDEKSIIKLASNESCLGASPLAIEAIRKAACDAHVYPSVDAIELREALAMRHGVPVRNIVCGNGMDAVIETLLRAFLETGDEVVIPLPAFSYYENVTRFCGATPKYCARRADFSLDVDAVLKQVTDRTKFIFITSPNNPTGNLTSLAEIRSVANAVDGIVFVDEAYIDFSGGKTALELMKECDNIVIGRTMSKAWGLAGMRIGYGFMPDWIFREYMKVATPFALSRIAIAAALAALKDEEHYNRTVETVKAERQFLMENVPFKVYPSEANFVLIDTAPLTSKHVVTEAMKRGVILRDCASFREMGDRYVRITVGTREQNVRLVEVLAEIKGSR.

Residue lysine 221 is modified to N6-(pyridoxal phosphate)lysine.

It belongs to the class-II pyridoxal-phosphate-dependent aminotransferase family. Histidinol-phosphate aminotransferase subfamily. Pyridoxal 5'-phosphate is required as a cofactor.

The enzyme catalyses L-histidinol phosphate + 2-oxoglutarate = 3-(imidazol-4-yl)-2-oxopropyl phosphate + L-glutamate. Its pathway is amino-acid biosynthesis; L-histidine biosynthesis; L-histidine from 5-phospho-alpha-D-ribose 1-diphosphate: step 7/9. The chain is Histidinol-phosphate aminotransferase from Methanocella arvoryzae (strain DSM 22066 / NBRC 105507 / MRE50).